The chain runs to 941 residues: Endoplasmic reticulum aminopeptidase 1 (941 aa).

Position 1 (Met1) is a topological domain, cytoplasmic. Residues 2–21 (VFLPLKWSLATMSFLLSSLL) traverse the membrane as a helical; Signal-anchor for type II membrane protein segment. The Lumenal segment spans residues 22-941 (ALLTVSTPSW…WLQSEKLERM (920 aa)). N-linked (GlcNAc...) asparagine glycosylation is found at Asn70 and Asn154. Substrate-binding positions include Glu183 and 317-321 (GAMEN). A Zn(2+)-binding site is contributed by His353. Glu354 (proton acceptor) is an active-site residue. The Zn(2+) site is built by His357 and Glu376. 2 disulfide bridges follow: Cys404-Cys443 and Cys736-Cys743. Asn414 carries an N-linked (GlcNAc...) asparagine glycan. Asn760 and Asn901 each carry an N-linked (GlcNAc...) asparagine glycan.

Belongs to the peptidase M1 family. In terms of assembly, monomer. May also exist as a heterodimer; with ERAP2. Interacts with RBMX. Zn(2+) serves as cofactor. In terms of processing, N-glycosylated. In terms of tissue distribution, ubiquitous.

Its subcellular location is the endoplasmic reticulum membrane. In terms of biological role, aminopeptidase that plays a central role in peptide trimming, a step required for the generation of most HLA class I-binding peptides. Peptide trimming is essential to customize longer precursor peptides to fit them to the correct length required for presentation on MHC class I molecules. Strongly prefers substrates 9-16 residues long. Rapidly degrades 13-mer to a 9-mer and then stops. Preferentially hydrolyzes the residue Leu and peptides with a hydrophobic C-terminus, while it has weak activity toward peptides with charged C-terminus. May play a role in the inactivation of peptide hormones. May be involved in the regulation of blood pressure through the inactivation of angiotensin II and/or the generation of bradykinin in the kidney. The protein is Endoplasmic reticulum aminopeptidase 1 (ERAP1) of Homo sapiens (Human).